We begin with the raw amino-acid sequence, 481 residues long: Glutamate-1-semialdehyde 2,1-aminomutase, chloroplastic (481 aa).

The segment at Asn-18–Ala-40 is disordered. Lys-321 carries the post-translational modification N6-(pyridoxal phosphate)lysine.

Belongs to the class-III pyridoxal-phosphate-dependent aminotransferase family. HemL subfamily. As to quaternary structure, homodimer. It depends on pyridoxal 5'-phosphate as a cofactor.

The protein resides in the plastid. The protein localises to the chloroplast. The enzyme catalyses (S)-4-amino-5-oxopentanoate = 5-aminolevulinate. It functions in the pathway porphyrin-containing compound metabolism; protoporphyrin-IX biosynthesis; 5-aminolevulinate from L-glutamyl-tRNA(Glu): step 2/2. The protein operates within porphyrin-containing compound metabolism; chlorophyll biosynthesis. This Solanum lycopersicum (Tomato) protein is Glutamate-1-semialdehyde 2,1-aminomutase, chloroplastic.